The primary structure comprises 164 residues: Phosphopantetheine adenylyltransferase (164 aa).

Ser9 is a binding site for substrate. ATP contacts are provided by residues 9 to 10 (SF) and His17. The substrate site is built by Lys41, Leu73, and Arg87. ATP is bound by residues 88–90 (GLR), Glu98, and 123–129 (YTFLSSS).

Belongs to the bacterial CoaD family. In terms of assembly, homohexamer. The cofactor is Mg(2+).

The protein resides in the cytoplasm. The catalysed reaction is (R)-4'-phosphopantetheine + ATP + H(+) = 3'-dephospho-CoA + diphosphate. It functions in the pathway cofactor biosynthesis; coenzyme A biosynthesis; CoA from (R)-pantothenate: step 4/5. Its function is as follows. Reversibly transfers an adenylyl group from ATP to 4'-phosphopantetheine, yielding dephospho-CoA (dPCoA) and pyrophosphate. In Dictyoglomus thermophilum (strain ATCC 35947 / DSM 3960 / H-6-12), this protein is Phosphopantetheine adenylyltransferase.